A 215-amino-acid chain; its full sequence is Cytochrome b6 (215 aa).

Residues 32-52 traverse the membrane as a helical segment; it reads IFYCLGGITLTCFLVQVATGF. C35 is a heme c binding site. 2 residues coordinate heme b: H86 and H100. 3 helical membrane passes run 90-110, 116-136, and 186-206; these read ASMM…TGGF, LTWV…VTGY, and LHTF…FLMI. 2 residues coordinate heme b: H187 and H202.

It belongs to the cytochrome b family. PetB subfamily. In terms of assembly, the 4 large subunits of the cytochrome b6-f complex are cytochrome b6, subunit IV (17 kDa polypeptide, PetD), cytochrome f and the Rieske protein, while the 4 small subunits are PetG, PetL, PetM and PetN. The complex functions as a dimer. Heme b is required as a cofactor. Heme c serves as cofactor.

The protein localises to the plastid. The protein resides in the chloroplast thylakoid membrane. Functionally, component of the cytochrome b6-f complex, which mediates electron transfer between photosystem II (PSII) and photosystem I (PSI), cyclic electron flow around PSI, and state transitions. The chain is Cytochrome b6 from Oenothera elata subsp. hookeri (Hooker's evening primrose).